Reading from the N-terminus, the 1093-residue chain is Protein AF-17 (1093 aa).

The segment at 5–57 (VGGCCVCSDERGWAENPLVYCDGHACSVAVHQACYGIVQVPTGPWFCRKCESQ) adopts a PHD-type 1 zinc-finger fold. The segment at 62–95 (RVRCELCPHKDGALKRTDNGGWAHVVCALYIPEV) adopts a C2HC pre-PHD-type zinc-finger fold. The PHD-type 2 zinc finger occupies 118–181 (KTCYICEEQG…KYCGYCKYHF (64 aa)). Positions 185 to 500 (KTSRHSSGGG…GGPAAPSLPS (316 aa)) are disordered. The segment covering 191 to 212 (SGGGGGGAGGGGGSMGGGGSGF) has biased composition (gly residues). Residues 231-255 (PTHHERGQKKSRKDKERLKQKHKKR) are compositionally biased toward basic residues. Ser-258 is subject to Phosphoserine. The span at 258–268 (SPPSILTPPVV) shows a compositional bias: pro residues. Basic and acidic residues predominate over residues 282–300 (SHHEASTQETSESSRESKG). Over residues 301–316 (KKSSSHSLSHKGKKLS) the composition is skewed to basic residues. The span at 317–340 (SGKGVSSFTSASSSSSSSSSSSGG) shows a compositional bias: low complexity. Residues 345-354 (AVSSLQSSPD) are compositionally biased toward polar residues. The span at 374–388 (APAPSAPPSPSAPEP) shows a compositional bias: pro residues. Phosphoserine occurs at positions 378 and 423. Residues 410 to 425 (STTTSSSGRARAPSPG) show a composition bias toward low complexity. Thr-451 carries the post-translational modification Phosphothreonine. Over residues 465–484 (EKKHKASKRSRHGPGRPKGS) the composition is skewed to basic residues. Positions 729–764 (LQKENQRLQEQILSLTAKKERLQILNVQLSVPFPAL) are leucine-zipper. Disordered regions lie at residues 775–871 (VPGP…RAPG) and 1060–1093 (QTNPFLSLSGAEGSGGGPKGGTADKGASANQEKG). Residues 787–796 (SSDSLSTSKS) are compositionally biased toward low complexity. The segment covering 804–813 (GLDNSLSTSS) has biased composition (polar residues). Composition is skewed to low complexity over residues 818–832 (SGCPSRSSSSLSFHS) and 839–853 (LLQQSPATLPLALPG).

In terms of assembly, interacts with histone H3; interaction is necessary for MLLT6 binding to nucleosomes; interaction is inhibited by histone H3 'Lys-27' methylations (H3K27me1, H3K27me2 and H3K27me3).

The protein localises to the nucleus. The sequence is that of Protein AF-17 (MLLT6) from Homo sapiens (Human).